A 187-amino-acid polypeptide reads, in one-letter code: UPF0301 protein VF_0434 (187 aa).

Belongs to the UPF0301 (AlgH) family.

This chain is UPF0301 protein VF_0434, found in Aliivibrio fischeri (strain ATCC 700601 / ES114) (Vibrio fischeri).